An 89-amino-acid chain; its full sequence is Small ribosomal subunit protein uS15 (89 aa).

The protein belongs to the universal ribosomal protein uS15 family. In terms of assembly, part of the 30S ribosomal subunit. Forms a bridge to the 50S subunit in the 70S ribosome, contacting the 23S rRNA.

Its function is as follows. One of the primary rRNA binding proteins, it binds directly to 16S rRNA where it helps nucleate assembly of the platform of the 30S subunit by binding and bridging several RNA helices of the 16S rRNA. Functionally, forms an intersubunit bridge (bridge B4) with the 23S rRNA of the 50S subunit in the ribosome. This chain is Small ribosomal subunit protein uS15, found in Geobacillus sp. (strain WCH70).